The following is a 144-amino-acid chain: MTIQVLNGPNLGRLGKREAAVYGSVTYAELVSLIEAEAAVLGVDVQVRQSDSEAELLGWVHDAADAKDPVILNAGAFTHTSVALRDACAELSAGLIEVHISNVHAREEFRHHSYLSALATGVIVGLGVQGYLLALRYFVASASS.

Tyr22 functions as the Proton acceptor in the catalytic mechanism. Substrate contacts are provided by Asn73, His79, and Asp86. Residue His99 is the Proton donor of the active site. Residues 100 to 101 (IS) and Arg110 contribute to the substrate site.

This sequence belongs to the type-II 3-dehydroquinase family. Homododecamer.

The catalysed reaction is 3-dehydroquinate = 3-dehydroshikimate + H2O. It participates in metabolic intermediate biosynthesis; chorismate biosynthesis; chorismate from D-erythrose 4-phosphate and phosphoenolpyruvate: step 3/7. Catalyzes a trans-dehydration via an enolate intermediate. The polypeptide is 3-dehydroquinate dehydratase (Mycobacteroides abscessus (strain ATCC 19977 / DSM 44196 / CCUG 20993 / CIP 104536 / JCM 13569 / NCTC 13031 / TMC 1543 / L948) (Mycobacterium abscessus)).